Reading from the N-terminus, the 86-residue chain is KASVLITLAVLGVMFVWTSAAELEERGSDQRDSPALIKSMAKVFQSEERECTKLLGGCTKDSECCPHLGCRKKWPYHCGWDGTFGK.

The N-terminal stretch at 1–20 (KASVLITLAVLGVMFVWTSA) is a signal peptide. Residues 21–49 (AELEERGSDQRDSPALIKSMAKVFQSEER) constitute a propeptide that is removed on maturation. Intrachain disulfides connect Cys-51–Cys-65, Cys-58–Cys-70, and Cys-64–Cys-78. A Phenylalanine amide modification is found at Phe-84.

This sequence belongs to the neurotoxin 10 (Hwtx-1) family. 47 subfamily. Expressed by the venom gland.

It is found in the secreted. Functionally, inhibits TTX-sensitive and TTX-insensitive sodium currents (IC(50) is 0.6 uM and 0.95 uM respectively) on rat dorsal root ganglion (DRG) neurons. Inhibits muscular subtypes sodium channels Nav1.4/SCN4A and Nav1.5/SCN5A transiently transfected in to HEK293 cells (IC(50) is 5.42 uM and 0.45 uM respectively). Also blocks Kv2.1/KCNB1 potassium channels expressed in X.laevis oocytes with an IC(50) of 604 nM. Injection of the toxin in mice was immediately followed by general ataxia, lack of response to stimuli and semiparalysis. In Chilobrachys guangxiensis (Chinese earth tiger tarantula), this protein is U18-theraphotoxin-Cg1a.